A 288-amino-acid chain; its full sequence is Nucleotide-binding protein Pcar_1935 (288 aa).

Position 11-18 (11-18 (GLSGSGKT)) interacts with ATP. 62-65 (DVRN) contacts GTP.

Belongs to the RapZ-like family.

Displays ATPase and GTPase activities. In Syntrophotalea carbinolica (strain DSM 2380 / NBRC 103641 / GraBd1) (Pelobacter carbinolicus), this protein is Nucleotide-binding protein Pcar_1935.